The primary structure comprises 108 residues: Iron-sulfur cluster assembly protein CyaY (108 aa).

It belongs to the frataxin family.

Functionally, involved in iron-sulfur (Fe-S) cluster assembly. May act as a regulator of Fe-S biogenesis. The polypeptide is Iron-sulfur cluster assembly protein CyaY (Burkholderia ambifaria (strain MC40-6)).